We begin with the raw amino-acid sequence, 758 residues long: Polyribonucleotide nucleotidyltransferase (758 aa).

The Mg(2+) site is built by D482 and D488. Residues 549–608 enclose the KH domain; it reads PRVLSFYIDKDKISAAIGTKGKNIRSVCERSNAKIEIGDDGKVSVFAISSTEAEAAKNMM. The region spanning 618–686 is the S1 motif domain; the sequence is GSIIDAKVVK…KGGCPKLSRR (69 aa). The disordered stretch occupies residues 707 to 758; sequence DGLNNRDNYYNNSFNKKPEDNYHSNRPTRPRSGFSNRSRPKFGNNDSSSGFY. Over residues 711 to 721 the composition is skewed to low complexity; that stretch reads NRDNYYNNSFN.

It belongs to the polyribonucleotide nucleotidyltransferase family. It depends on Mg(2+) as a cofactor.

Its subcellular location is the cytoplasm. It catalyses the reaction RNA(n+1) + phosphate = RNA(n) + a ribonucleoside 5'-diphosphate. Its function is as follows. Involved in mRNA degradation. Catalyzes the phosphorolysis of single-stranded polyribonucleotides processively in the 3'- to 5'-direction. The polypeptide is Polyribonucleotide nucleotidyltransferase (Wolbachia pipientis subsp. Culex pipiens (strain wPip)).